The sequence spans 443 residues: Thymidine phosphorylase (443 aa).

The protein belongs to the thymidine/pyrimidine-nucleoside phosphorylase family. In terms of assembly, homodimer.

It catalyses the reaction thymidine + phosphate = 2-deoxy-alpha-D-ribose 1-phosphate + thymine. It functions in the pathway pyrimidine metabolism; dTMP biosynthesis via salvage pathway; dTMP from thymine: step 1/2. Its function is as follows. The enzymes which catalyze the reversible phosphorolysis of pyrimidine nucleosides are involved in the degradation of these compounds and in their utilization as carbon and energy sources, or in the rescue of pyrimidine bases for nucleotide synthesis. In Shewanella denitrificans (strain OS217 / ATCC BAA-1090 / DSM 15013), this protein is Thymidine phosphorylase.